Reading from the N-terminus, the 601-residue chain is ATP-dependent rRNA helicase SPB4 (601 aa).

Residues 14–42 (LAWSQASLQPWIHDAIDSLGFRSMTPVQA) carry the Q motif motif. The Helicase ATP-binding domain occupies 45 to 228 (IPLFCGNKDV…RTGMSNPVKI (184 aa)). 58 to 65 (AVTGSGKT) serves as a coordination point for ATP. The DEAD box signature appears at 176-179 (DEAD). The region spanning 257–419 (VLINMLSTLQ…AYKAFSKNLR (163 aa)) is the Helicase C-terminal domain. Residues 507–575 (KEKIRLETME…QIMNESSDEE (69 aa)) adopt a coiled-coil conformation. A compositionally biased stretch (basic and acidic residues) spans 532-554 (LKVKNEAWSSKNEKKEGKQERRE). Residues 532–576 (LKVKNEAWSSKNEKKEGKQERREKMKRKREAIEKQIMNESSDEET) form a disordered region.

The protein belongs to the DEAD box helicase family. DDX55/SPB4 subfamily. Component of pre-60S ribosomal complexes.

It is found in the nucleus. The protein localises to the nucleolus. The catalysed reaction is ATP + H2O = ADP + phosphate + H(+). Its function is as follows. ATP-binding RNA helicase involved in the biogenesis of 60S ribosomal subunits. Binds 90S pre-ribosomal particles and dissociates from pre-60S ribosomal particles after processing of 27SB pre-rRNA. Required for the normal formation of 18S rRNA through the processing of pre-rRNAs at sites A0, A1 and A2, and the normal formation of 25S and 5.8S rRNAs through the processing of pre-rRNAs at sites C1 and C2. This Meyerozyma guilliermondii (strain ATCC 6260 / CBS 566 / DSM 6381 / JCM 1539 / NBRC 10279 / NRRL Y-324) (Yeast) protein is ATP-dependent rRNA helicase SPB4.